The primary structure comprises 126 residues: Fluoride-specific ion channel FluC (126 aa).

2 helical membrane-spanning segments follow: residues 2 to 22 (IKSLFAVIIGGSVGCTLRWLL) and 36 to 56 (GTLVVNLLAGLIIGTALAYFL). Positions 75 and 78 each coordinate Na(+). The next 2 membrane-spanning stretches (helical) occupy residues 80–100 (FSTFSVEVFALLQAGNYIWAL) and 105–125 (VHVIGSLIMTALGFFIITILF).

This sequence belongs to the fluoride channel Fluc/FEX (TC 1.A.43) family. Homodimer.

The protein resides in the cell inner membrane. The enzyme catalyses fluoride(in) = fluoride(out). With respect to regulation, na(+) is not transported, but it plays an essential structural role and its presence is essential for fluoride channel function. Functionally, fluoride-specific ion channel. Important for reducing fluoride concentration in the cell, thus reducing its toxicity. Is highly specific for fluoride ions and cannot transport chloride ions. In Escherichia coli O1:K1 / APEC, this protein is Fluoride-specific ion channel FluC.